The following is a 157-amino-acid chain: Monooxygenase CPUR_05417 (157 aa).

Belongs to the avfA family.

Its pathway is secondary metabolite biosynthesis. Functionally, monooxygenase; part of the ergochrome gene cluster responsible for the typical purple-black color of the ergot sclerotia. The ergochrome gene cluster produces several ergot pigments including the yellow ergochrome secalonic acid and its derivatives, as well as the red anthraquinones endocrocin and clavorubin. The pathway begins with the synthesis of atrochrysone thioester by the polyketide synthase (PKS) CPUR_05437. The atrochrysone carboxyl ACP thioesterase CPUR_05436 then breaks the thioester bond and releases the atrochrysone carboxylic acid from CPUR_05437. The atrochrysone carboxylic acid is then converted to atrochrysone which is further transformed into emodin anthrone. The next step is performed by the anthrone oxygenase CPUR_05434 that catalyzes the oxidation of emodinanthrone to emodin. Emodin is further modified to yield monodictyphenone via several steps involving CPUR_05427, CPUR_05428, CPUR_05429 and CPUR_05430. The short chain dehydrogenase/reductase CPUR_05418 then catalyzes the C-5 ketoreduction to give the xanthone skeleton of the monomeric units. Ergochromes formation requires further dimerization steps of different xanthone units, probably catalyzed by the cytochrome P450 monooxygenase CPUR_05419. CPUR_05425, CPUR_05426 and CPUR_05431 are unique to Claviceps, thus it is likely that they are involved in further modification of xanthone units or in their dimerization. The yellow ergochromes and the red anthraquinone pigments endocrocin and clavorubin are products from the same PKS derived precursors and the latter are likely shunt products in the pathway of xanthone biosynthesis. It is proposed that atrochrysone carboxylic acid released from the PKS CPUR_05437 can also be converted to endocrocin anthrone which is further oxidized into endocrocin by CPUR_05435. Endocrocin could be then modified to clavorubin, possibly by CPUR_05423 and CPUR_05431. Clavorubin is the principal anthraquinone metabolite produced by the cluster with a much higher yield compared to endocrocin. This Claviceps purpurea (strain 20.1) (Ergot fungus) protein is Monooxygenase CPUR_05417.